The primary structure comprises 209 residues: Orotate phosphoribosyltransferase (209 aa).

Residues arginine 96, lysine 100, histidine 102, and 122–130 (EDLISTGGS) each bind 5-phospho-alpha-D-ribose 1-diphosphate. Serine 126 contributes to the orotate binding site.

It belongs to the purine/pyrimidine phosphoribosyltransferase family. PyrE subfamily. In terms of assembly, homodimer. It depends on Mg(2+) as a cofactor.

The catalysed reaction is orotidine 5'-phosphate + diphosphate = orotate + 5-phospho-alpha-D-ribose 1-diphosphate. The protein operates within pyrimidine metabolism; UMP biosynthesis via de novo pathway; UMP from orotate: step 1/2. Functionally, catalyzes the transfer of a ribosyl phosphate group from 5-phosphoribose 1-diphosphate to orotate, leading to the formation of orotidine monophosphate (OMP). The polypeptide is Orotate phosphoribosyltransferase (Streptococcus agalactiae serotype Ia (strain ATCC 27591 / A909 / CDC SS700)).